The chain runs to 225 residues: 3-dehydroquinate dehydratase (225 aa).

3-dehydroquinate contacts are provided by residues S6, 30–32, and R62; that span reads EWR. Catalysis depends on H118, which acts as the Proton donor/acceptor. K143 acts as the Schiff-base intermediate with substrate in catalysis. R186, S205, and Q209 together coordinate 3-dehydroquinate.

It belongs to the type-I 3-dehydroquinase family. As to quaternary structure, homodimer.

The enzyme catalyses 3-dehydroquinate = 3-dehydroshikimate + H2O. Its pathway is metabolic intermediate biosynthesis; chorismate biosynthesis; chorismate from D-erythrose 4-phosphate and phosphoenolpyruvate: step 3/7. Its function is as follows. Involved in the third step of the chorismate pathway, which leads to the biosynthesis of aromatic amino acids. Catalyzes the cis-dehydration of 3-dehydroquinate (DHQ) and introduces the first double bond of the aromatic ring to yield 3-dehydroshikimate. The sequence is that of 3-dehydroquinate dehydratase from Streptococcus sanguinis (strain SK36).